The sequence spans 2524 residues: Neurogenic locus notch homolog protein 1 (2524 aa).

The N-terminal stretch at 1-19 (MDRIGLAVLLCSLPVLTQG) is a signal peptide. EGF-like domains follow at residues 20–57 (LRCT…ERCQ), 58–99 (FPNP…KVCL), 102–140 (VDNA…DSCQ), and 141–177 (QADP…ATCK). At 20-1729 (LRCTQTAEMC…METPKPSTLY (1710 aa)) the chain is on the extracellular side. 33 disulfides stabilise this stretch: Cys22–Cys35, Cys29–Cys45, Cys47–Cys56, Cys62–Cys74, Cys68–Cys87, Cys89–Cys98, Cys106–Cys117, Cys111–Cys128, Cys130–Cys139, Cys145–Cys156, Cys150–Cys165, Cys167–Cys176, Cys183–Cys194, Cys188–Cys203, Cys205–Cys214, Cys221–Cys232, Cys226–Cys242, Cys244–Cys253, Cys260–Cys271, Cys265–Cys280, Cys282–Cys291, Cys298–Cys311, Cys305–Cys320, Cys322–Cys331, Cys338–Cys349, Cys343–Cys358, Cys360–Cys369, Cys375–Cys386, Cys380–Cys397, Cys399–Cys408, Cys415–Cys428, Cys422–Cys437, and Cys439–Cys448. The region spanning 179-215 (DINECSQNPCKNGGQCINEFGSYRCTCQNRFTGRNCD) is the EGF-like 5; calcium-binding domain. Residues 217 to 254 (PYVPCNPSPCLNGGTCRQTDDTSYDCTCLPGFSGQNCE) enclose the EGF-like 6 domain. O-linked (Fuc...) threonine; alternate glycosylation is present at Thr231. The O-linked (GalNAc...) threonine; alternate glycan is linked to Thr231. The EGF-like 7; calcium-binding domain occupies 256 to 292 (NIDDCPSNNCRNGGTCVDGVNTYNCQCPPDWTGQYCT). An EGF-like 8; calcium-binding domain is found at 294-332 (DVDECQLMPNACQNGGTCHNTYGGYNCVCVNGWTGEDCS). Residues 334 to 370 (NIDDCANAACHSGATCHDRVASFYCECPHGRTGLLCH) form the EGF-like 9; calcium-binding domain. In terms of domain architecture, EGF-like 10 spans 371–409 (LDNACISNPCNEGSNCDTNPVNGKAICTCPPGYTGPACN). Residues 411-449 (DVDECSLGANPCEHGGRCTNTLGSFQCNCPQGYAGPRCE) enclose the EGF-like 11; calcium-binding domain. Ca(2+)-binding residues include Thr431 and Ser434. Residue Ser434 is glycosylated (O-linked (Glc...) serine). Asp451, Val452, and Glu454 together coordinate Ca(2+). An EGF-like 12; calcium-binding domain is found at 451–487 (DVNECLSNPCQNDSTCLDQIGEFQCICMPGYEGLYCE). Disulfide bonds link Cys455-Cys466, Cys460-Cys475, and Cys477-Cys486. O-linked (Glc...) serine glycosylation is present at Ser457. N-linked (GlcNAc...) asparagine glycosylation is present at Asn462. A glycan (O-linked (Fuc...) threonine) is linked at Thr465. Ca(2+) contacts are provided by Asp468 and Gln469. 3 residues coordinate Ca(2+): Asn489, Ile490, and Glu492. An EGF-like 13; calcium-binding domain is found at 489–525 (NIDECASNPCLHNGKCIDKINEFRCDCPTGFSGNLCQ). 75 cysteine pairs are disulfide-bonded: Cys493–Cys504, Cys498–Cys513, Cys515–Cys524, Cys531–Cys542, Cys536–Cys551, Cys553–Cys562, Cys569–Cys579, Cys574–Cys588, Cys590–Cys599, Cys606–Cys617, Cys611–Cys626, Cys628–Cys637, Cys644–Cys654, Cys649–Cys663, Cys665–Cys674, Cys681–Cys692, Cys686–Cys701, Cys703–Cys712, Cys719–Cys729, Cys724–Cys738, Cys740–Cys749, Cys756–Cys767, Cys761–Cys776, Cys778–Cys787, Cys794–Cys805, Cys799–Cys814, Cys816–Cys825, Cys832–Cys843, Cys837–Cys854, Cys856–Cys865, Cys872–Cys883, Cys877–Cys892, Cys894–Cys903, Cys910–Cys921, Cys915–Cys930, Cys932–Cys941, Cys948–Cys959, Cys953–Cys968, Cys970–Cys979, Cys986–Cys997, Cys991–Cys1006, Cys1008–Cys1017, Cys1024–Cys1035, Cys1029–Cys1044, Cys1046–Cys1055, Cys1062–Cys1073, Cys1067–Cys1082, Cys1084–Cys1093, Cys1100–Cys1121, Cys1115–Cys1130, Cys1132–Cys1141, Cys1148–Cys1159, Cys1153–Cys1168, Cys1170–Cys1179, Cys1186–Cys1197, Cys1191–Cys1206, Cys1208–Cys1217, Cys1224–Cys1243, Cys1237–Cys1252, Cys1254–Cys1263, Cys1270–Cys1283, Cys1275–Cys1292, Cys1294–Cys1303, Cys1310–Cys1321, Cys1315–Cys1333, Cys1335–Cys1344, Cys1351–Cys1362, Cys1356–Cys1371, Cys1373–Cys1382, Cys1390–Cys1401, Cys1395–Cys1412, Cys1414–Cys1423, Cys1447–Cys1470, Cys1452–Cys1465, and Cys1461–Cys1477. Ser495 carries an O-linked (Glc...) serine glycan. Residues Asp506 and Lys507 each coordinate Ca(2+). The EGF-like 14; calcium-binding domain maps to 527 to 563 (DFDECTSTPCKNGAKCLDGPNSYTCQCTEGFTGRHCE). The EGF-like 15; calcium-binding domain occupies 565–600 (DINECIPDPCHYGTCKDGIATFTCLCRPGYTGRLCD). Residues 602-638 (DINECLSKPCLNGGQCTDRENGYICTCPKGTTGVNCE) enclose the EGF-like 16; calcium-binding domain. The 36-residue stretch at 640-675 (KIDDCASNLCDNGKCIDKIDGYECTCEPGYTGKLCN) folds into the EGF-like 17 domain. Residues 677 to 713 (NINECDSNPCRNGGTCKDQINGFTCVCPDGYHDHMCL) enclose the EGF-like 18; calcium-binding domain. The region spanning 715 to 750 (EVNECNSNPCIHGACHDGVNGYKCDCEAGWSGSNCD) is the EGF-like 19; calcium-binding domain. The EGF-like 20; calcium-binding domain occupies 752-788 (NNNECESNPCMNGGTCKDMTGAYICTCKAGFSGPNCQ). An EGF-like 21; calcium-binding domain is found at 790-826 (NINECSSNPCLNHGTCIDDVAGYKCNCMLPYTGAICE). The 39-residue stretch at 828 to 866 (VLAPCAGSPCKNGGRCKESEDFETFSCECPPGWQGQTCE) folds into the EGF-like 22 domain. The 37-residue stretch at 868–904 (DMNECVNRPCRNGATCQNTNGSYKCNCKPGYTGRNCE) folds into the EGF-like 23; calcium-binding domain. A glycan (N-linked (GlcNAc...) asparagine) is linked at Asn887. The 37-residue stretch at 906–942 (DIDDCQPNPCHNGGSCSDGINMFFCNCPAGFRGPKCE) folds into the EGF-like 24; calcium-binding domain. Residues 944–980 (DINECASNPCKNGANCTDCVNSYTCTCQPGFSGIHCE) form the EGF-like 25; calcium-binding domain. N-linked (GlcNAc...) asparagine glycosylation is present at Asn958. One can recognise an EGF-like 26 domain in the interval 982–1018 (NTPDCTESSCFNGGTCIDGINTFTCQCPPGFTGSYCQ). The 37-residue stretch at 1020–1056 (DINECDSKPCLNGGTCQDSYGTYKCTCPQGYTGLNCQ) folds into the EGF-like 27; calcium-binding domain. EGF-like domains are found at residues 1058–1094 (LVRW…VYCD) and 1096–1142 (PSVS…SYCE). In terms of domain architecture, EGF-like 30; calcium-binding spans 1144 to 1180 (QVDECSPNPCQNGATCTDYLGGYSCECVAGYHGVNCS). N-linked (GlcNAc...) asparagine glycosylation is present at Asn1178. One can recognise an EGF-like 31; calcium-binding domain in the interval 1182-1218 (EINECLSHPCQNGGTCIDLINTYKCSCPRGTQGVHCE). The EGF-like 32; calcium-binding domain maps to 1220-1264 (NVDDCTPFYDSFTLEPKCFNNGKCIDRVGGYNCICPPGFVGERCE). 4 consecutive EGF-like domains span residues 1266–1304 (DVNE…RRCE), 1306–1346 (VVDG…TCEY), 1347–1383 (DSRT…ATCQ), and 1386–1424 (VISP…LFCH). The O-linked (Fuc...) threonine; alternate glycan is linked to Thr1400. Residue Thr1400 is glycosylated (O-linked (GalNAc...) threonine; alternate). LNR repeat units lie at residues 1447–1487 (CENE…PWKN), 1488–1529 (CTQS…CNPL), and 1530–1564 (YDQY…NMPE). Asn1487 carries an N-linked (GlcNAc...) asparagine glycan. 5 disulfide bridges follow: Cys1488/Cys1512, Cys1494/Cys1507, Cys1503/Cys1519, Cys1534/Cys1547, and Cys1543/Cys1559. Asn1508 carries an N-linked (GlcNAc...) asparagine glycan. The N-linked (GlcNAc...) asparagine glycan is linked to Asn1584. The helical transmembrane segment at 1730-1750 (PMLSMLVIPLLIIFVFMMVIV) threads the bilayer. Residues 1751-2524 (NKKRRREHGQ…QRTHIPEAFK (774 aa)) lie on the Cytoplasmic side of the membrane. 6 ANK repeats span residues 1876–1919 (DGFT…QLHN), 1924–1953 (TGET…DANV), 1957–1987 (MGRT…DLDA), 1991–2020 (DGTT…DVNA), 2024–2053 (FGKS…NKDM), and 2057–2086 (KEET…NRDI). 3 disordered regions span residues 2144–2230 (NMKP…LNHL), 2369–2407 (MQAQ…FCSS), and 2451–2524 (LTPP…EAFK). Polar residues-rich tracts occupy residues 2180–2192 (GKTT…SSGV) and 2208–2230 (DVSS…LNHL). The span at 2369–2394 (MQAQQMQQQQNLQLHQSMQQQHHNSS) shows a compositional bias: low complexity. Composition is skewed to polar residues over residues 2395–2407 (TTST…FCSS) and 2451–2471 (LTPP…SHQL). Residues 2481–2496 (PSPESPDQWSSSSPHS) show a composition bias toward low complexity. Polar residues predominate over residues 2497 to 2516 (NMSDWSEGISSPPTSMQPQR).

The protein belongs to the NOTCH family. As to quaternary structure, forms a ternary complex with nrarp and rbpj/suh. O-glycosylated on the EGF-like domains. Contains both O-linked fucose and O-linked glucose. O-linked glycosylation by galnt11 is involved in determination of left/right symmetry: glycosylation promotes activation of notch1, possibly by promoting cleavage by adam17, modulating the balance between motile and immotile (sensory) cilia at the left-right organiser (LRO). Post-translationally, synthesized in the endoplasmic reticulum as an inactive form which is proteolytically cleaved by a furin-like convertase in the trans-Golgi network before it reaches the plasma membrane to yield an active, ligand-accessible form. Cleavage results in a C-terminal fragment N(TM) and a N-terminal fragment N(EC). Following ligand binding, it is cleaved by adam17 to yield a membrane-associated intermediate fragment called notch extracellular truncation (NEXT). Following endocytosis, this fragment is then cleaved by presenilin dependent gamma-secretase to release a Notch-derived peptide containing the intracellular domain (NICD) from the membrane.

The protein resides in the cell membrane. It localises to the nucleus. Functions as a receptor for membrane-bound ligands Jagged-1 (JAG1), Jagged-2 (JAG2) and Delta-1 (DLL1) to regulate cell-fate determination. Upon ligand activation through the released notch intracellular domain (NICD) it forms a transcriptional activator complex with RBPJ/RBPSUH and activates genes of the enhancer of split locus. Affects the implementation of differentiation, proliferation and apoptotic programs. Involved in angiogenesis; negatively regulates endothelial cell proliferation and migration and angiogenic sprouting. Involved in the maturation of both CD4(+) and CD8(+) cells in the thymus. Important for follicular differentiation and possibly cell fate selection within the follicle. During cerebellar development, functions as a receptor for neuronal DNER and is involved in the differentiation of Bergmann glia. Represses neuronal and myogenic differentiation. May play an essential role in postimplantation development, probably in some aspect of cell specification and/or differentiation. May be involved in mesoderm development, somite formation and neurogenesis. Involved in determination of left/right symmetry by modulating the balance between motile and immotile (sensory) cilia at the left-right organiser (LRO). This Xenopus laevis (African clawed frog) protein is Neurogenic locus notch homolog protein 1 (notch1).